Here is a 330-residue protein sequence, read N- to C-terminus: NADH-quinone oxidoreductase subunit H (330 aa).

The next 8 helical transmembrane spans lie at 11–31, 81–101, 114–134, 154–174, 187–207, 238–258, 270–290, and 309–329; these read ILVA…CGAL, FIFV…FAII, IGIL…LFAG, ISYE…VGSF, LWFI…GVAV, FFVG…TLFF, QIPF…FILL, and FCLP…LAAA.

It belongs to the complex I subunit 1 family. In terms of assembly, NDH-1 is composed of 13 different subunits. Subunits NuoA, H, J, K, L, M, N constitute the membrane sector of the complex.

Its subcellular location is the cell inner membrane. The catalysed reaction is a quinone + NADH + 5 H(+)(in) = a quinol + NAD(+) + 4 H(+)(out). Functionally, NDH-1 shuttles electrons from NADH, via FMN and iron-sulfur (Fe-S) centers, to quinones in the respiratory chain. The immediate electron acceptor for the enzyme in this species is believed to be ubiquinone. Couples the redox reaction to proton translocation (for every two electrons transferred, four hydrogen ions are translocated across the cytoplasmic membrane), and thus conserves the redox energy in a proton gradient. This subunit may bind ubiquinone. This is NADH-quinone oxidoreductase subunit H from Ectopseudomonas mendocina (strain ymp) (Pseudomonas mendocina).